We begin with the raw amino-acid sequence, 264 residues long: Signal peptidase I (264 aa).

Residues 1–18 (MNRDNTKTNKTVKQEFAS) lie on the Cytoplasmic side of the membrane. A helical transmembrane segment spans residues 19-39 (FTFVICIALVIRILIMEPFTV). The Periplasmic segment spans residues 40 to 264 (PTGSMKATIL…IFKNLYNVDE (225 aa)). Catalysis depends on residues S43 and K106.

Belongs to the peptidase S26 family.

The protein resides in the cell inner membrane. It catalyses the reaction Cleavage of hydrophobic, N-terminal signal or leader sequences from secreted and periplasmic proteins.. In terms of biological role, complements E.coli mutants temperature-sensitive for LepB function. In Rickettsia typhi (strain ATCC VR-144 / Wilmington), this protein is Signal peptidase I (lepB).